The following is a 328-amino-acid chain: Probable transcription factor At4g00610 (328 aa).

The segment at 31-143 (AKNKTLVTPS…ERAKTETETG (113 aa)) is disordered. Residues 35–54 (TLVTPSTVKKSSDVASTSKK) show a composition bias toward polar residues. Acidic residues predominate over residues 84 to 108 (SEEEEEDEPSSDSESGSESESDTEA). Over residues 122–143 (NEKRQSEGKPEEERAKTETETG) the composition is skewed to basic and acidic residues.

Belongs to the GeBP family.

The polypeptide is Probable transcription factor At4g00610 (Arabidopsis thaliana (Mouse-ear cress)).